A 360-amino-acid chain; its full sequence is Photosystem II protein D1 3 (360 aa).

The next 3 membrane-spanning stretches (helical) occupy residues Tyr-29–Val-46, His-118–Leu-133, and Trp-142–Ala-156. Residue His-118 coordinates chlorophyll a. Tyr-126 is a binding site for pheophytin a. Asp-170 and Glu-189 together coordinate [CaMn4O5] cluster. A helical membrane pass occupies residues Phe-197–Leu-218. His-198 contributes to the chlorophyll a binding site. A quinone-binding positions include His-215 and Ser-264–Phe-265. His-215 is a binding site for Fe cation. His-272 serves as a coordination point for Fe cation. Residues Phe-274–Leu-288 form a helical membrane-spanning segment. [CaMn4O5] cluster-binding residues include His-332, Glu-333, Asp-342, and Ala-344. The propeptide occupies Ala-345 to Gly-360.

This sequence belongs to the reaction center PufL/M/PsbA/D family. In terms of assembly, PSII is composed of 1 copy each of membrane proteins PsbA, PsbB, PsbC, PsbD, PsbE, PsbF, PsbH, PsbI, PsbJ, PsbK, PsbL, PsbM, PsbT, PsbX, PsbY, PsbZ, Psb30/Ycf12, peripheral proteins PsbO, CyanoQ (PsbQ), PsbU, PsbV and a large number of cofactors. It forms dimeric complexes. Requires The D1/D2 heterodimer binds P680, chlorophylls that are the primary electron donor of PSII, and subsequent electron acceptors. It shares a non-heme iron and each subunit binds pheophytin, quinone, additional chlorophylls, carotenoids and lipids. D1 provides most of the ligands for the Mn4-Ca-O5 cluster of the oxygen-evolving complex (OEC). There is also a Cl(-1) ion associated with D1 and D2, which is required for oxygen evolution. The PSII complex binds additional chlorophylls, carotenoids and specific lipids. as cofactor. Post-translationally, tyr-161 forms a radical intermediate that is referred to as redox-active TyrZ, YZ or Y-Z. C-terminally processed by CtpA; processing is essential to allow assembly of the oxygen-evolving complex and thus photosynthetic growth.

It is found in the cellular thylakoid membrane. It catalyses the reaction 2 a plastoquinone + 4 hnu + 2 H2O = 2 a plastoquinol + O2. Its function is as follows. Photosystem II (PSII) is a light-driven water:plastoquinone oxidoreductase that uses light energy to abstract electrons from H(2)O, generating O(2) and a proton gradient subsequently used for ATP formation. It consists of a core antenna complex that captures photons, and an electron transfer chain that converts photonic excitation into a charge separation. The D1/D2 (PsbA/PsbD) reaction center heterodimer binds P680, the primary electron donor of PSII as well as several subsequent electron acceptors. The polypeptide is Photosystem II protein D1 3 (Trichormus variabilis (strain ATCC 29413 / PCC 7937) (Anabaena variabilis)).